Consider the following 314-residue polypeptide: Adenosine receptor A3 (314 aa).

The Extracellular segment spans residues 1-14 (MAVNGTALLLANVT). Residues N4 and N12 are each glycosylated (N-linked (GlcNAc...) asparagine). The chain crosses the membrane as a helical span at residues 15–37 (YITVEILIGLCAIVGNVLVIWVV). Topologically, residues 38 to 48 (KLNPSLQTTTF) are cytoplasmic. The chain crosses the membrane as a helical span at residues 49 to 72 (YFIVSLALADIAVGVLVMPLAIVI). Residues 73–84 (SLGITIQFYNCL) lie on the Extracellular side of the membrane. A disulfide bridge links C83 with C166. The chain crosses the membrane as a helical span at residues 85-106 (FMTCLLLIFTHASIMSLLAIAV). Residues 107-126 (DRYLRVKLTVRYRRVTTQRR) lie on the Cytoplasmic side of the membrane. Residues 127 to 148 (IWLALGLCWLVSFLVGLTPMFG) traverse the membrane as a helical segment. Residues 149–177 (WNMKLTSEHQRNVTFLSCQFSSVMRMDYM) are Extracellular-facing. N160 carries an N-linked (GlcNAc...) asparagine glycan. A helical transmembrane segment spans residues 178-198 (VYFSFFTWILIPLVVMCAIYL). The Cytoplasmic portion of the chain corresponds to 199–231 (DIFYVIRNKLNQNFSSSKETGAFYGREFKTAKS). Residues 232 to 255 (LFLVLFLFAFSWLPLSIINCITYF) form a helical membrane-spanning segment. At 256-261 (HGEVPQ) the chain is on the extracellular side. The chain crosses the membrane as a helical span at residues 262 to 284 (IILYLGILLSHANSMMNPIVYAY). Topologically, residues 285–314 (KIKKFKETYLLIFKTYMICQSSDSLDSSTE) are cytoplasmic. C303 carries S-palmitoyl cysteine lipidation.

It belongs to the G-protein coupled receptor 1 family.

It is found in the cell membrane. Receptor for adenosine. The activity of this receptor is mediated by G proteins which inhibits adenylyl cyclase. The polypeptide is Adenosine receptor A3 (ADORA3) (Canis lupus familiaris (Dog)).